A 135-amino-acid polypeptide reads, in one-letter code: Small ribosomal subunit protein uS9 (135 aa).

Over residues 102–115 (PLKTEGHLSRDPRA) the composition is skewed to basic and acidic residues. Positions 102-135 (PLKTEGHLSRDPRAKERRKYGLKKARKAPQFSKR) are disordered. Residues 116–135 (KERRKYGLKKARKAPQFSKR) are compositionally biased toward basic residues.

This sequence belongs to the universal ribosomal protein uS9 family.

In Synechococcus sp. (strain CC9311), this protein is Small ribosomal subunit protein uS9.